The chain runs to 238 residues: Ribonuclease PH (238 aa).

Phosphate contacts are provided by residues R86 and 124–126 (GTR).

It belongs to the RNase PH family. In terms of assembly, homohexameric ring arranged as a trimer of dimers.

It carries out the reaction tRNA(n+1) + phosphate = tRNA(n) + a ribonucleoside 5'-diphosphate. In terms of biological role, phosphorolytic 3'-5' exoribonuclease that plays an important role in tRNA 3'-end maturation. Removes nucleotide residues following the 3'-CCA terminus of tRNAs; can also add nucleotides to the ends of RNA molecules by using nucleoside diphosphates as substrates, but this may not be physiologically important. Probably plays a role in initiation of 16S rRNA degradation (leading to ribosome degradation) during starvation. In Shigella boydii serotype 18 (strain CDC 3083-94 / BS512), this protein is Ribonuclease PH.